Reading from the N-terminus, the 3206-residue chain is MSTLVCQAVAAPVWSNGARTRRIRDADGEYRCTQCDMGFDSMTMARPVNHCCDGIMIDEYNLYDDDPIMHLVDSKTPIKRGSQETEGDGMAAEAIKVTGAEPVNCFMVGTIKCKINENSIVAKGVMAAIPRQLTQDEVFMRKARLQAAVAKSTIEREEKERQFAFSKLEEKLRARREKLKDGIVIKTRKGLEWREATPNQQRGKLQSTSFDASGGKTLTPHTIYCKTKSSKFSNGGVKCATSKKMRTVRKPQSLKMKTESIDVLIEQVMTIAGKHAKQVTLIDKQKTNRVWIRRVNGVRLLQVETKHHKGIISQKDASLNNLTKRVARHFARKTAYIHPSDSITHGHSGVVFLRANISGSKSYSIDDLFVVRGKRNGKLMESRNKVAWRKMFQIDHFSIVGIKIWNAFDAEYVKLRDESVSDHDCVGGITPEECGILAAQILRVFYPCWRITCTKCISNWLSKPTSEQIEHIYERGNLAIQDLNKRIPSAHHVTQMVELLRQRIKNTTFDMGNNTKVHELIGHRQDGVFRHLNRLNNSILAANGSSTIEWESMNESLLELARWHNKRTESIASGGISSFRNKISAKAQINFALMCDNQLDTNGNFVWGERGYHAKRFFSEFFTKIDPKDGYSHHTVRATPTGVRHLAIGNLIIPGDLQKLREKLEGVSITAVGISEKCVSRRNGDFVYPCSCVTSENGKPVLSDVILPTRNHLVIGNTGDPKLVDLPKTETGRMWIAKEGYCYINIFFAMLVNVSEKDAKDFTKFVRDEIMPQLGKWPTMMDVATACYKLAIIYPDVRDAQLPRILVDHSEQIFHVIDSYGSMTTGYHILKAGTVSQLISFAHGALLGEMKMYRVGGTQKMEINMCCCQRKNLLIKQLIRAIYRPKLLTEIIETEPFVLMLAIVSPSILKAMFRSGTFNQAIKFYMHRSKPTAQTLAFLEALSERVSRSRVLSEQFNIIDGALKELKSLANMSMRTQHTYPIVQNQLDIMIERVSADAELLRDGFVVSKGRVQALIEKNYQDDLRNSFTDLPYVQQLQQTMSFSRVKHGFGELCESKDLSFSKEAWMGHLSSFSAGGKQIIRLARTKSQQMLASGGRRVTLAARNITMRMVTATFSEIMKFVNMLLVLSMIFKLWKQANTLLEEREKDKWEKFDRSQNELRRQLRYTLWRFEAQEGRQVTREEFFDYLKYNEGIENRHELINELIANQPLFSIQAKKHGEIRFEQTVALMALLAMMFGSDRSDAVFSTLSKVRTIFTTMAQEVRCQSIDDIHDVFDEKKATIDFELATDQPAQVQMDKTFCEWWQNQMEQNRTVPHYRTGGKFIEFTRSNAASVANEIAHTPDFSEYLIRGAVGSGKSTGLPCYLSAKGRVLLLEPTRPLTENVCAQLRGSPFHKSPSMSMRNGHTFGSTPIHVMTTGYALHFFCNNVERIREYDFVIFDECHVIDSSAMSFYCALKEYSYQGKILKVSATPPGREVEFKTQFPVTIATEDSLSFDQFVQAQGSGANCDILKKGHNILVYVSSYNEVDRLSKLLVDRGFKVTKVDGRTMKLGGVEINTSGTAEKPHFIVATNIIENGVTLDIDVVVDFGVKVVAELDADARTMRYNKQAISYGERIQRLGRVGRLKDGHALRIGHTEKGITEIPVAIAVESAFQCFAYGLPVMTSNVSTSIIGNCTVKQARTMMNFELSPFFTVELVKYNGTMHPEIHKILVPYKLRDSSMQLCKEAIPNSGVSRWHTAHEYISHGIVLETLKSDVRIPFYLKGVPEKVYEKIWNAVCVFKSDSGFGRMSTASACNVAYTLKTDPLSITRTIAHIDALLIEEQEKKSQFDLMSSHVTNSSSISLAGLVNRLRSKWMVDHSGENIVKLQNARSQLLEFRGMDINLDDVESFRKFGCAETVRCQSKSEVSKTLQLKGKWNKPLITSDFFVVCMVSIGCVVLMYQIFMAKWNEPVKLEGKSKAKTLRFRQARDNNAKYEVFADEDTKRHYFGEAYTKKGKKSGKARGMGVKTKKFVNVYGFDPCEYSLVRFVDPLTGLTYDRHPMEHMMDVQETIGDDRREAMWNDELDKQLFVTRPTIEAYYIKDKTTPALKIDLNPHNPMRVCDKAETIAGFPEREFELRQSGSATLVPYSEVPVQNEKQEFDEEHVRTEAASLHFGLRDYNPIAQAVCRITNTGVDYDRSIFGIGFGQFLITNAHCFKLNEGETRIVSRHGQFTIEKTHSLPIHQVKDKDMVIVRLPKDFPPFPQRLQFRAPQEREKICLVGSNFQEKSIQSVITESCMTFKHNGGKYWKHWITTKEGHCGLPAVALKDGHIVGIHNLGGENTNINYFTPFDADILDKYLLNAEALQWTKGWKYNKNKVCWGGLELLDDNEPEESGLFRMVKLLKSLEEDGVRTQSRDDAWLEKEIKGSLKVVARCPGQLVTKHVVKGPCAMFQLYLELHEDAKSFFTPRMGSYGKSRLSKGAFIKDIMKYSSNTVVGNVDCDVFENAIDNVEKILWKAGMMQCEYVTDAEAIFQSLNMNAAVGAMYQGKKKDYFEDFTAADRELIVKQSCERLFLGKKGVWNGSLKAELRPIEKVHENKTRTFTAAPLDTLLGGKVCVDDFNNFFYSCHLRGPWTVGITKFYAGWNEFLSKLPDGWLYCDADGSRFDSSLTPYLINAVLELRLRFMEEWDAGEQMLKNLYTEIIYTPIATPDGSVIKKTKGNNSGQPSTVVDNTLMVILAMQYSLQLLGVDFETQDEVVRYFANGDDLLIAVRPDCEFVLKGLEIHFSNLGLNYNFSARHHDKKDVWFMSTRGILRDGILIPKLEEERIVAILEWDRSREFSHRLDAICAAMIEAWGYDELLQHIRKFYYWLLEQEPYRSIAQEGKAPYIAETALRHLYTNAMATQSELEKYTEAINQHYNDEGGDGSIKVRLQAGDETKDDERRRKEEEDRKKREESIDASQFGSNRDNKKNKNKESDTPNKLIVKSDRDVDAGSSGTITVPRLEKISAKIRMPKHKGGVAISLQHLVDYNPAQVDISNTRATQSQFDNWWRAVSQEYGVGDNEMQVLASGLMVWCIENGTSPNINGMWTMMDGEEQVEYPLKPVMDNARPTFRQIMAHFSDVAEAYIEKRNSTEVYIPRYALQRNLRDPSLARYGFDFYEITAKTPVRAREAHFQMKAAAIRGKSNSLFGLDGNVGTQEENTERHTAEDVNQNMHNLLGMRAM.

Residues Lys-255–Phe-397 enclose the Peptidase S30 domain. Active-site for P1 proteinase activity residues include His-307, Asp-316, and Ser-348. An Involved in interaction with stylet and aphid transmission motif is present at residues Arg-450–Cys-453. Residues Pro-708–Arg-710 carry the Involved in virions binding and aphid transmission motif. Residues Met-734–Gly-856 enclose the Peptidase C6 domain. Catalysis depends on for helper component proteinase activity residues Cys-742 and His-815. The Helicase ATP-binding domain maps to Ile-1338 to Glu-1490. Residue Gly-1351 to Ser-1358 coordinates ATP. Residues Asp-1440–His-1443 carry the DECH box motif. The Helicase C-terminal domain maps to Ser-1494–Ser-1668. A Nuclear localization signal motif is present at residues Lys-1994–Lys-2001. Tyr-2016 bears the O-(5'-phospho-RNA)-tyrosine mark. One can recognise a Peptidase C4 domain in the interval Ala-2150–Asp-2368. Active-site for nuclear inclusion protein A activity residues include His-2195, Asp-2230, and Cys-2300. Residues Trp-2637–Leu-2761 enclose the RdRp catalytic domain. The interval His-2900–Gly-2979 is disordered. Basic and acidic residues-rich tracts occupy residues Ala-2916–Ser-2939 and Arg-2949–Asp-2974.

This sequence belongs to the potyviridae genome polyprotein family. In terms of assembly, interacts with host eIF4E protein (via cap-binding region); this interaction mediates the translation of the VPg-viral RNA conjugates. Part of a complex that comprises VPg, RNA, host EIF4E and EIF4G; this interaction mediates the translation of the VPg-viral RNA conjugates. Post-translationally, VPg is uridylylated by the polymerase and is covalently attached to the 5'-end of the genomic RNA. This uridylylated form acts as a nucleotide-peptide primer for the polymerase. In terms of processing, potyviral RNA is expressed as two polyproteins which undergo post-translational proteolytic processing. Genome polyprotein is processed by NIa-pro, P1 and HC-pro proteinases resulting in the production of at least ten individual proteins. P3N-PIPO polyprotein is cleaved by P1 and HC-pro proteinases resulting in the production of three individual proteins. The P1 proteinase and the HC-pro cleave only their respective C-termini autocatalytically. 6K1 is essential for proper proteolytic separation of P3 from CI.

It is found in the host cytoplasmic vesicle. The protein localises to the host nucleus. Its subcellular location is the virion. It carries out the reaction RNA(n) + a ribonucleoside 5'-triphosphate = RNA(n+1) + diphosphate. It catalyses the reaction Hydrolyzes glutaminyl bonds, and activity is further restricted by preferences for the amino acids in P6 - P1' that vary with the species of potyvirus, e.g. Glu-Xaa-Xaa-Tyr-Xaa-Gln-|-(Ser or Gly) for the enzyme from tobacco etch virus. The natural substrate is the viral polyprotein, but other proteins and oligopeptides containing the appropriate consensus sequence are also cleaved.. The catalysed reaction is Hydrolyzes a Gly-|-Gly bond at its own C-terminus, commonly in the sequence -Tyr-Xaa-Val-Gly-|-Gly, in the processing of the potyviral polyprotein.. Its function is as follows. Required for aphid transmission and also has proteolytic activity. Only cleaves a Gly-Gly dipeptide at its own C-terminus. Interacts with virions and aphid stylets. Acts as a suppressor of RNA-mediated gene silencing, also known as post-transcriptional gene silencing (PTGS), a mechanism of plant viral defense that limits the accumulation of viral RNAs. May have RNA-binding activity. In terms of biological role, has helicase activity. It may be involved in replication. Functionally, indispensable for virus replication. Mediates the cap-independent, EIF4E-dependent translation of viral genomic RNAs. Binds to the cap-binding site of host EIF4E and thus interferes with the host EIF4E-dependent mRNA export and translation. VPg-RNA directly binds EIF4E and is a template for transcription. Also forms trimeric complexes with EIF4E-EIF4G, which are templates for translation. Its function is as follows. Has RNA-binding and proteolytic activities. In terms of biological role, an RNA-dependent RNA polymerase that plays an essential role in the virus replication. Functionally, involved in aphid transmission, cell-to-cell and systemis movement, encapsidation of the viral RNA and in the regulation of viral RNA amplification. The sequence is that of Genome polyprotein from Pisum sativum (Garden pea).